Consider the following 753-residue polypeptide: MALNSEVMFREQINAMRSQAGRKRATSLQSFCSGNTDDSSADSTDNMDMMVDYPQQKGVSCMRARFNSESTLSKSFRKKVKKLAQKDRRSKERLNGNSEEDAIEVPRGAPSTYAAPSKLRKSKALDCLVSEKPKDEGRREDSGHGADIEMAKGHFNNVRMKVFAARTAMQVEPALVMKTRKALEMKNAVLENHQSPGAFSLHAAYKIAASAESRVGSITPCNKKVTKEAMANLIRSSYDDTEITQELLFSSKFDTKWKGRYTDIYMRRDENGKKPKRPVNGQGWVMPLKSICEKFGINSTFFTNHRIDLKSARDQVLLMRLLSHDQTSTWISDIHPEAVKNETMAEYLLRELDASTMQKRVQAFKANVLADRDRVRVAGQFYNNIRIGKRMFGAARKAKYLSTIIGGMERRFEILENSVNHIPFTHSASDNNQEKCRNPRVHCKDSTRIALQFPRGQYLGDFIHANRISGKPLFNEFIMTQAPMKNTVDDFWRMVWQEEVPYIVMLTSRKEPERCEYYWPKSPSDPAVTVPGGLRIENFGVYQAPDPLFRVTHLRLIGPDREERHVEHWQGDVNNSSNMYSPLNILRLLRNASKPVVIHDHLGVSRAACLVAAEIAICSLLRGPTYKYPVQRAVQFLRQRRPFSIETPMQYIFVHRLVAFFFRDVIGSAKELDVDYERWLQERSERMFLDDLAAPIPGYRLLSPRADPDIVRMVGRPERPNYRREAPDCVGEMPNKVATVDGILSPAKSVFEF.

2 disordered regions span residues 26 to 46 (TSLQ…STDN) and 75 to 145 (SFRK…SGHG). The span at 35–46 (NTDDSSADSTDN) shows a compositional bias: low complexity. Basic and acidic residues-rich tracts occupy residues 84–94 (AQKDRRSKERL) and 129–145 (VSEK…SGHG). The region spanning 408-661 (MERRFEILEN…IFVHRLVAFF (254 aa)) is the Tyrosine-protein phosphatase domain.

The protein belongs to the protein-tyrosine phosphatase family. In terms of assembly, part of a complex, consisting of pseudophosphatases egg-3, egg-4, egg-5 and kinase mbk-2; this complex is required for the oocyte-to-zygote transition. Interacts (via tyrosine-protein phosphatase domain) with kinase mbk-2 (via 'Tyr-619' and 'Tyr-621'); mbk-2 tyrosine phosphorylation enhances the interaction. The interaction inhibits mbk-2 kinase activity and is required for mbk-2 oocyte cortex localization. Interacts with egg-3.

It localises to the cytoplasm. Its subcellular location is the cell cortex. Inactive phosphatase which acts redundantly with egg-5 in the oocyte-to-zygote transition. Required for the polarization of cortical actin cytoskeleton rearrangement in the oocyte before and after fertilization. Together with egg-5, required for the cortical localization of kinase mbk-2 and for the inhibition of mbk-2 kinase activity in maturing oocyte until the end of meiosis I. Also required for kinase mbk-2, pseudophosphatase egg-3 and chitin synthase chs-1 localization to cytoplasmic foci after fertilization. The protein is Inactive protein-tyrosine phosphatase egg-4 of Caenorhabditis elegans.